A 129-amino-acid polypeptide reads, in one-letter code: Small ribosomal subunit protein uS11 (129 aa).

This sequence belongs to the universal ribosomal protein uS11 family. Part of the 30S ribosomal subunit. Interacts with proteins S7 and S18. Binds to IF-3.

Functionally, located on the platform of the 30S subunit, it bridges several disparate RNA helices of the 16S rRNA. Forms part of the Shine-Dalgarno cleft in the 70S ribosome. This Nitratidesulfovibrio vulgaris (strain DSM 19637 / Miyazaki F) (Desulfovibrio vulgaris) protein is Small ribosomal subunit protein uS11.